The chain runs to 465 residues: Argininosuccinate lyase (465 aa).

Belongs to the lyase 1 family. Argininosuccinate lyase subfamily.

The protein resides in the cytoplasm. It catalyses the reaction 2-(N(omega)-L-arginino)succinate = fumarate + L-arginine. It functions in the pathway amino-acid biosynthesis; L-arginine biosynthesis; L-arginine from L-ornithine and carbamoyl phosphate: step 3/3. In Variovorax paradoxus (strain S110), this protein is Argininosuccinate lyase.